Reading from the N-terminus, the 2233-residue chain is Acetyl-CoA carboxylase (2233 aa).

N-acetylserine is present on serine 2. Serine 2 carries the post-translational modification Phosphoserine. The 510-residue stretch at 58–567 (VISKILIANN…TTGWLDDLIT (510 aa)) folds into the Biotin carboxylation domain. The 193-residue stretch at 216–408 (KTGLVSVDDD…LPAAQLQIAM (193 aa)) folds into the ATP-grasp domain. 256-261 (GGGGKG) provides a ligand contact to ATP. Positions 365, 379, and 381 each coordinate Mn(2+). Arginine 383 is an active-site residue. Positions 694–768 (LEVENDPTQL…VAGDIMAIMT (75 aa)) constitute a Biotinyl-binding domain. At lysine 735 the chain carries N6-biotinyllysine. Serine 790, serine 1148, serine 1157, and serine 1162 each carry phosphoserine. Residues 1486–1822 (PYPVKEWLQP…KRNMPVPILE (337 aa)) enclose the CoA carboxyltransferase N-terminal domain. Residues 1486 to 2141 (PYPVKEWLQP…EEYLIKRLSH (656 aa)) are carboxyltransferase. Position 1627-1629 (1627-1629 (ARI)) interacts with acetyl-CoA. CoA is bound at residue arginine 1731. The CoA carboxyltransferase C-terminal domain occupies 1826–2141 (TWDRPVDFTP…EEYLIKRLSH (316 aa)). Glycine 1998 contacts acetyl-CoA. The CoA site is built by lysine 2034 and arginine 2036.

Homodimer. The cofactor is biotin. It depends on Mn(2+) as a cofactor.

Its subcellular location is the cytoplasm. It is found in the endoplasmic reticulum membrane. It carries out the reaction hydrogencarbonate + acetyl-CoA + ATP = malonyl-CoA + ADP + phosphate + H(+). The catalysed reaction is N(6)-biotinyl-L-lysyl-[protein] + hydrogencarbonate + ATP = N(6)-carboxybiotinyl-L-lysyl-[protein] + ADP + phosphate + H(+). It functions in the pathway lipid metabolism; malonyl-CoA biosynthesis; malonyl-CoA from acetyl-CoA: step 1/1. With respect to regulation, by phosphorylation. The catalytic activity is inhibited by soraphen A, a polyketide isolated from the myxobacterium Sorangium cellulosum and a potent inhibitor of fungal growth. Functionally, carries out three functions: biotin carboxyl carrier protein, biotin carboxylase and carboxyltransferase. Involved in the synthesis of very-long-chain fatty acid synthesis which is required to maintain a functional nuclear envelope. Required for acylation and vacuolar membrane association of VAC8 which is necessary to maintain a normal morphology of the vacuole. This Saccharomyces cerevisiae (strain ATCC 204508 / S288c) (Baker's yeast) protein is Acetyl-CoA carboxylase (ACC1).